Reading from the N-terminus, the 519-residue chain is Demethylepipodophyllotoxin synthase (519 aa).

The helical transmembrane segment at 6–26 threads the bilayer; sequence CLETLLLGFFVLLPCFFYFVW. Residue Cys-458 participates in heme binding.

Belongs to the cytochrome P450 family. The cofactor is heme. In terms of tissue distribution, rhizome-specific expression.

Its subcellular location is the membrane. The catalysed reaction is (-)-4'-desmethyl-deoxypodophyllotoxin + reduced [NADPH--hemoprotein reductase] + O2 = 4'-demethylepipodophyllotoxin + oxidized [NADPH--hemoprotein reductase] + H2O + H(+). It participates in aromatic compound metabolism; phenylpropanoid biosynthesis. Its function is as follows. Cytochrome P450 involved in the biosynthesis of etoposide, a chemotherapeutic compound of the topoisomerase inhibitor family. Catalyzes the hydroxylation of deoxypodophyllotoxin to form epipodophyllotoxin. The protein is Demethylepipodophyllotoxin synthase of Sinopodophyllum hexandrum (Himalayan may apple).